The sequence spans 382 residues: Anhydro-N-acetylmuramic acid kinase (382 aa).

ATP is bound at residue G9–D16.

The protein belongs to the anhydro-N-acetylmuramic acid kinase family.

It catalyses the reaction 1,6-anhydro-N-acetyl-beta-muramate + ATP + H2O = N-acetyl-D-muramate 6-phosphate + ADP + H(+). Its pathway is amino-sugar metabolism; 1,6-anhydro-N-acetylmuramate degradation. It functions in the pathway cell wall biogenesis; peptidoglycan recycling. Its function is as follows. Catalyzes the specific phosphorylation of 1,6-anhydro-N-acetylmuramic acid (anhMurNAc) with the simultaneous cleavage of the 1,6-anhydro ring, generating MurNAc-6-P. Is required for the utilization of anhMurNAc either imported from the medium or derived from its own cell wall murein, and thus plays a role in cell wall recycling. This is Anhydro-N-acetylmuramic acid kinase from Bacillus anthracis (strain A0248).